The following is a 188-amino-acid chain: MKIAVIYFGGQYNHLIVKDLKYLGLNAVLITPEKPVEILKDYDCIIFGGGPYSVITELNKMGNAVDYVLRTSQPKLGICLGHQLLAKVLGGEVTKATKPEYGLVKVNINDEDTILRGLSPSINAWESHTDEVISPPQGFRILANSENAKVQAMVNKDNTIFGVQFHPEVKHTEKGIEVFKNFIEACKK.

Residues 2–188 form the Glutamine amidotransferase type-1 domain; the sequence is KIAVIYFGGQ…FKNFIEACKK (187 aa). The active-site Nucleophile is the Cys-79. Active-site residues include His-166 and Glu-168.

As to quaternary structure, heterodimer composed of a glutamine amidotransferase subunit (A) and a GMP-binding subunit (B).

It carries out the reaction XMP + L-glutamine + ATP + H2O = GMP + L-glutamate + AMP + diphosphate + 2 H(+). It functions in the pathway purine metabolism; GMP biosynthesis; GMP from XMP (L-Gln route): step 1/1. In terms of biological role, catalyzes the synthesis of GMP from XMP. The protein is GMP synthase [glutamine-hydrolyzing] subunit A of Sulfurisphaera tokodaii (strain DSM 16993 / JCM 10545 / NBRC 100140 / 7) (Sulfolobus tokodaii).